The following is an 89-amino-acid chain: UPF0297 protein SUB1776 (89 aa).

Belongs to the UPF0297 family.

This is UPF0297 protein SUB1776 from Streptococcus uberis (strain ATCC BAA-854 / 0140J).